Consider the following 615-residue polypeptide: Zinc finger protein 653 (615 aa).

3 disordered regions span residues 1-46, 93-115, and 174-235; these read MAER…ARRR, RSGR…KRRR, and PLSD…SGLI. Residues 7-25 are compositionally biased toward low complexity; that stretch reads EPGAEAEAGAGGEAAAEEG. Residues 106 to 115 are compositionally biased toward basic residues; that stretch reads KKPKRKKRRR. Composition is skewed to low complexity over residues 192 to 203 and 212 to 232; these read GSSDSSSSGSSS and QPAK…TGSS. 5 C2H2-type zinc fingers span residues 467–492, 498–522, 528–550, 556–578, and 586–609; these read FHCP…NLVH, KVCP…MIIH, FTCE…RRTH, LQCE…MKKH, and FTCD…LKSH.

This sequence belongs to the krueppel C2H2-type zinc-finger protein family. Interacts with NR5A1. As to expression, highly expressed in testis and spleen. Moderately expressed in lung, adrenal gland, uterus, and ovary. Very low expression in pancreas, heart, skeletal muscle, adipose tissue, kidney, and liver.

The protein localises to the nucleus. In terms of biological role, transcriptional repressor. May repress NR5A1, PPARG, NR1H3, NR4A2, ESR1 and NR3C1 transcriptional activity. The chain is Zinc finger protein 653 (Znf653) from Mus musculus (Mouse).